The following is a 347-amino-acid chain: Anthranilate phosphoribosyltransferase (347 aa).

5-phospho-alpha-D-ribose 1-diphosphate-binding positions include Gly82, 85 to 86 (GD), Thr90, 92 to 95 (NIST), 110 to 118 (KHGNRAITS), and Thr122. Gly82 is an anthranilate binding site. Ser94 lines the Mg(2+) pocket. Residue Asn113 coordinates anthranilate. Arg168 contacts anthranilate. Mg(2+) contacts are provided by Asp226 and Glu227.

Belongs to the anthranilate phosphoribosyltransferase family. As to quaternary structure, homodimer. It depends on Mg(2+) as a cofactor.

The catalysed reaction is N-(5-phospho-beta-D-ribosyl)anthranilate + diphosphate = 5-phospho-alpha-D-ribose 1-diphosphate + anthranilate. It functions in the pathway amino-acid biosynthesis; L-tryptophan biosynthesis; L-tryptophan from chorismate: step 2/5. Catalyzes the transfer of the phosphoribosyl group of 5-phosphorylribose-1-pyrophosphate (PRPP) to anthranilate to yield N-(5'-phosphoribosyl)-anthranilate (PRA). The sequence is that of Anthranilate phosphoribosyltransferase from Caulobacter sp. (strain K31).